The following is a 427-amino-acid chain: Gamma-glutamyl phosphate reductase (427 aa).

This sequence belongs to the gamma-glutamyl phosphate reductase family.

The protein localises to the cytoplasm. The catalysed reaction is L-glutamate 5-semialdehyde + phosphate + NADP(+) = L-glutamyl 5-phosphate + NADPH + H(+). It functions in the pathway amino-acid biosynthesis; L-proline biosynthesis; L-glutamate 5-semialdehyde from L-glutamate: step 2/2. In terms of biological role, catalyzes the NADPH-dependent reduction of L-glutamate 5-phosphate into L-glutamate 5-semialdehyde and phosphate. The product spontaneously undergoes cyclization to form 1-pyrroline-5-carboxylate. The chain is Gamma-glutamyl phosphate reductase from Streptomyces griseus subsp. griseus (strain JCM 4626 / CBS 651.72 / NBRC 13350 / KCC S-0626 / ISP 5235).